Reading from the N-terminus, the 357-residue chain is Holliday junction branch migration complex subunit RuvB (357 aa).

The tract at residues 1–27 (MGRFDDAGAQDAEPDDRDVSPALTVGE) is disordered. Positions 1–195 (MGRFDDAGAQ…FGFTAHMDFY (195 aa)) are large ATPase domain (RuvB-L). ATP is bound by residues Leu34, Arg35, Gly76, Lys79, Thr80, Ser81, 142 to 144 (EDF), Arg185, Tyr195, and Arg232. Thr80 serves as a coordination point for Mg(2+). Residues 196–266 (EPAELERVLA…IAKAALEVYD (71 aa)) are small ATPAse domain (RuvB-S). Residues 269-357 (ELGLDRLDRA…TGLGQTGLFD (89 aa)) are head domain (RuvB-H). 2 residues coordinate DNA: Arg324 and Arg329.

Belongs to the RuvB family. As to quaternary structure, homohexamer. Forms an RuvA(8)-RuvB(12)-Holliday junction (HJ) complex. HJ DNA is sandwiched between 2 RuvA tetramers; dsDNA enters through RuvA and exits via RuvB. An RuvB hexamer assembles on each DNA strand where it exits the tetramer. Each RuvB hexamer is contacted by two RuvA subunits (via domain III) on 2 adjacent RuvB subunits; this complex drives branch migration. In the full resolvosome a probable DNA-RuvA(4)-RuvB(12)-RuvC(2) complex forms which resolves the HJ.

It localises to the cytoplasm. The catalysed reaction is ATP + H2O = ADP + phosphate + H(+). The RuvA-RuvB-RuvC complex processes Holliday junction (HJ) DNA during genetic recombination and DNA repair, while the RuvA-RuvB complex plays an important role in the rescue of blocked DNA replication forks via replication fork reversal (RFR). RuvA specifically binds to HJ cruciform DNA, conferring on it an open structure. The RuvB hexamer acts as an ATP-dependent pump, pulling dsDNA into and through the RuvAB complex. RuvB forms 2 homohexamers on either side of HJ DNA bound by 1 or 2 RuvA tetramers; 4 subunits per hexamer contact DNA at a time. Coordinated motions by a converter formed by DNA-disengaged RuvB subunits stimulates ATP hydrolysis and nucleotide exchange. Immobilization of the converter enables RuvB to convert the ATP-contained energy into a lever motion, pulling 2 nucleotides of DNA out of the RuvA tetramer per ATP hydrolyzed, thus driving DNA branch migration. The RuvB motors rotate together with the DNA substrate, which together with the progressing nucleotide cycle form the mechanistic basis for DNA recombination by continuous HJ branch migration. Branch migration allows RuvC to scan DNA until it finds its consensus sequence, where it cleaves and resolves cruciform DNA. The chain is Holliday junction branch migration complex subunit RuvB from Mycobacterium sp. (strain JLS).